The chain runs to 270 residues: ES1 protein, mitochondrial (270 aa).

Expressed specifically in the inner segments of cone photoreceptor cells of the retina (at protein level).

Its subcellular location is the mitochondrion. Functionally, plays a role in promoting mitochondrial enlargement in cone photoreceptor cells in a fusion-independent and ATP-dependent manner. This is ES1 protein, mitochondrial from Danio rerio (Zebrafish).